The chain runs to 412 residues: Argininosuccinate synthase (412 aa).

ATP-binding positions include 15–23 (AYSGGLDTS) and alanine 42. The L-citrulline site is built by tyrosine 93 and serine 98. Glycine 123 contacts ATP. The L-aspartate site is built by threonine 125, asparagine 129, and aspartate 130. Residue asparagine 129 coordinates L-citrulline. The L-citrulline site is built by arginine 133, serine 185, serine 194, glutamate 270, and tyrosine 282.

The protein belongs to the argininosuccinate synthase family. Type 1 subfamily. As to quaternary structure, homotetramer.

It is found in the cytoplasm. The enzyme catalyses L-citrulline + L-aspartate + ATP = 2-(N(omega)-L-arginino)succinate + AMP + diphosphate + H(+). It functions in the pathway amino-acid biosynthesis; L-arginine biosynthesis; L-arginine from L-ornithine and carbamoyl phosphate: step 2/3. The polypeptide is Argininosuccinate synthase (Psychrobacter cryohalolentis (strain ATCC BAA-1226 / DSM 17306 / VKM B-2378 / K5)).